The sequence spans 348 residues: F(420)H(2) dehydrogenase subunit H (348 aa).

8 helical membrane passes run 20-40, 93-113, 127-147, 172-192, 198-218, 259-279, 286-306, and 328-348; these read GVVG…AVWL, IFMM…AVFI, ISVL…FMIA, PLGI…IVEI, LLWN…ALMA, ILGS…PAFV, GLIA…MTII, and LLPL…YLGA.

It belongs to the complex I subunit 1 family. In terms of assembly, the FPO complex is composed of at least 13 different subunits. FpoA, FpoH, FpoJ, FpoK, FpoL, FpoM and FpoN proteins constitute the membrane sector of the complex.

The protein resides in the cell membrane. It carries out the reaction methanophenazine + reduced coenzyme F420-(gamma-L-Glu)(n) = dihydromethanophenazine + oxidized coenzyme F420-(gamma-L-Glu)(n) + H(+). In terms of biological role, component of the F(420)H(2) dehydrogenase (FPO complex) which is part of the energy-conserving F(420)H(2):heterodisulfide oxidoreductase system. The membrane-bound electron transfer system of the complex plays an important role in the metabolism of methylotrophic methanogens when the organisms grow on methanol or methylamines. Catalyzes the oxidation of methanophenazine to dihydromethanophenazine. It shuttles electrons from F(420)H(2), via FAD and iron-sulfur (Fe-S) centers, to methanophenazine (an electron carrier in the membrane). It couples the redox reaction to proton translocation (for every two electrons transferred, two hydrogen ions are translocated across the cytoplasmic membrane), and thus conserves the redox energy in a proton gradient. This is F(420)H(2) dehydrogenase subunit H from Methanosarcina acetivorans (strain ATCC 35395 / DSM 2834 / JCM 12185 / C2A).